Reading from the N-terminus, the 569-residue chain is 4-coumarate--CoA ligase 2 (569 aa).

The ATP site is built by serine 219, serine 220, glycine 221, threonine 222, threonine 223, and lysine 227. (E)-4-coumaroyl-AMP is bound by residues phenylalanine 269 and serine 273. Arginine 290 lines the CoA pocket. The interval 292 to 361 (EMGAMLGAIE…ARLPQAIFGQ (70 aa)) is SBD1. (E)-4-coumaroyl-AMP contacts are provided by alanine 339, glutamine 361, glycine 362, threonine 366, and methionine 374. The ATP site is built by glutamine 361, glycine 362, and threonine 366. The SBD2 stretch occupies residues 362 to 429 (GYGMTEAGPV…IRGPQIMKGY (68 aa)). Residues aspartate 450 and arginine 465 each contribute to the ATP site. (E)-4-coumaroyl-AMP is bound by residues lysine 467 and lysine 471. Positions 473 and 474 each coordinate CoA. Residue lysine 556 coordinates ATP.

Belongs to the ATP-dependent AMP-binding enzyme family. Mg(2+) is required as a cofactor. As to expression, expressed in roots, stems, leaf blades, leaf sheaths and spikelets.

It catalyses the reaction (E)-ferulate + ATP + CoA = (E)-feruloyl-CoA + AMP + diphosphate. The enzyme catalyses (E)-4-coumarate + ATP + CoA = (E)-4-coumaroyl-CoA + AMP + diphosphate. The catalysed reaction is (E)-caffeate + ATP + CoA = (E)-caffeoyl-CoA + AMP + diphosphate. It carries out the reaction (E)-cinnamate + ATP + CoA = (E)-cinnamoyl-CoA + AMP + diphosphate. It catalyses the reaction (E)-ferulate + ATP + H(+) = (E)-feruloyl-AMP + diphosphate. The enzyme catalyses (E)-feruloyl-AMP + CoA = (E)-feruloyl-CoA + AMP + H(+). The catalysed reaction is (E)-4-coumarate + ATP + H(+) = (E)-4-coumaroyl-AMP + diphosphate. It carries out the reaction (E)-4-coumaroyl-AMP + CoA = (E)-4-coumaroyl-CoA + AMP + H(+). It catalyses the reaction (E)-caffeate + ATP + H(+) = (E)-caffeoyl-AMP + diphosphate. The enzyme catalyses (E)-caffeoyl-AMP + CoA = (E)-caffeoyl-CoA + AMP + H(+). It participates in phytoalexin biosynthesis; 3,4',5-trihydroxystilbene biosynthesis; 3,4',5-trihydroxystilbene from trans-4-coumarate: step 1/2. In terms of biological role, involved in the phenylpropanoid metabolism by mediating the activation of a number of hydroxycinnamates for the biosynthesis of monolignols and other phenolic secondary metabolites. Catalyzes the formation of CoA esters of cinnamate, 4-coumarate, caffeate and ferulate. Is more efficient with substrates in the following order: ferulate &gt; 4-coumarate &gt; caffeate &gt; cinnamate. Cannot convert sinapate to its corresponding CoA ester. Follows a two-step reaction mechanism, wherein the carboxylate substrate first undergoes adenylation by ATP, followed by a thioesterification in the presence of CoA to yield the final CoA thioester. The protein is 4-coumarate--CoA ligase 2 of Oryza sativa subsp. japonica (Rice).